The primary structure comprises 211 residues: Dof zinc finger protein 5 (211 aa).

A disordered region spans residues 37-101 (FVVAREKVEP…QRRLQDSAEA (65 aa)). Positions 68–80 (IKREAADRDEEQR) are enriched in basic and acidic residues. The segment at 109–163 (LPCPRCRSRDTKFCYFNNYNVNQPRHFCKACHRYWTAGGALRNVPVGAGRRKNRP) adopts a Dof-type zinc-finger fold. Residues cysteine 111, cysteine 114, cysteine 136, and cysteine 139 each contribute to the Zn(2+) site. The interval 191 to 211 (SPTSPSPVYTDRWPVTPDRPF) is disordered.

Its subcellular location is the nucleus. Its function is as follows. Transcription factor that may transactivate seed storage protein genes in developing seeds. This chain is Dof zinc finger protein 5, found in Oryza sativa subsp. japonica (Rice).